Consider the following 448-residue polypeptide: Probable glycine dehydrogenase (decarboxylating) subunit 1 (448 aa).

This sequence belongs to the GcvP family. N-terminal subunit subfamily. The glycine cleavage system is composed of four proteins: P, T, L and H. In this organism, the P 'protein' is a heterodimer of two subunits.

The catalysed reaction is N(6)-[(R)-lipoyl]-L-lysyl-[glycine-cleavage complex H protein] + glycine + H(+) = N(6)-[(R)-S(8)-aminomethyldihydrolipoyl]-L-lysyl-[glycine-cleavage complex H protein] + CO2. The glycine cleavage system catalyzes the degradation of glycine. The P protein binds the alpha-amino group of glycine through its pyridoxal phosphate cofactor; CO(2) is released and the remaining methylamine moiety is then transferred to the lipoamide cofactor of the H protein. This Caulobacter vibrioides (strain ATCC 19089 / CIP 103742 / CB 15) (Caulobacter crescentus) protein is Probable glycine dehydrogenase (decarboxylating) subunit 1.